Reading from the N-terminus, the 391-residue chain is MEHTWRWFGPDDPITLDEIRQTGATGIVTALHEIPNGEIWPEAAIAERKRLIEASGLAWSVVESVPVHEDIKQGRGDCETHIARYQQTLRNLAACGIDVVCYNFMPVLDWTRTDLAWPLPGGGTALRFDQTAFAAFDLYLLERPGAEADYDATERDAARAYLDGLDESARQRLIDTIIAGLPGAEEHYSLARFREVIAEYAEIDAERLRDNLGHFLRAVVPVAEEVGIRLAIHPDDPPRPLLGLPRVVSTPRDVQWILDAAPSPANGLTFCTGSYGVSAAIDLVAMGERFAERIYFAHLRATQRENDPRSFHESAHLDGDVDMVGVIKALVGEERRRERDGGPRLPLRPDHGHHLLDDLSRDTRPGYPLIGRLKGLAELRGVETAIKQLAI.

The interval 334 to 359 (ERRRERDGGPRLPLRPDHGHHLLDDL) is disordered.

The protein belongs to the mannonate dehydratase family. Fe(2+) serves as cofactor. It depends on Mn(2+) as a cofactor.

It catalyses the reaction D-mannonate = 2-dehydro-3-deoxy-D-gluconate + H2O. Its pathway is carbohydrate metabolism; pentose and glucuronate interconversion. In terms of biological role, catalyzes the dehydration of D-mannonate. This chain is Mannonate dehydratase, found in Chromohalobacter salexigens (strain ATCC BAA-138 / DSM 3043 / CIP 106854 / NCIMB 13768 / 1H11).